The chain runs to 641 residues: Calpain-6 (641 aa).

One can recognise a Calpain catalytic domain in the interval 26-343 (LFCDPTFLPE…FHKLNVCRNV (318 aa)). The interval 344–495 (NNPVFGRKEL…IFSEVPVQLR (152 aa)) is domain III. A C2 domain is found at 498–621 (TLDMPKMSCW…YLRKKGGPTA (124 aa)).

Belongs to the peptidase C2 family. As to quaternary structure, interacts (via domain III) with microtubules. Interacts (via domain II) with ARHGEF2 (via the N-terminal zinc finger).

It is found in the cytoplasm. Its subcellular location is the perinuclear region. It localises to the cytoskeleton. The protein localises to the spindle. Microtubule-stabilizing protein that may be involved in the regulation of microtubule dynamics and cytoskeletal organization. May act as a regulator of RAC1 activity through interaction with ARHGEF2 to control lamellipodial formation and cell mobility. Does not seem to have protease activity as it has lost the active site residues. The polypeptide is Calpain-6 (Capn6) (Mus musculus (Mouse)).